Here is a 354-residue protein sequence, read N- to C-terminus: Rhodopsin (354 aa).

Over 1–36 (MNGTEGPYFYIPMLNTTGVVRSPYEYPQYYLVNPAA) the chain is Extracellular. Residues Asn-2 and Asn-15 are each glycosylated (N-linked (GlcNAc...) asparagine). Residues 37–61 (YAVLGAYMFFLILVGFPINFLTLYV) traverse the membrane as a helical segment. Residues 62-73 (TIEHKKLRTPLN) are Cytoplasmic-facing. Residues 74 to 96 (YILLNLAVADLFMVFGGFTTTIY) traverse the membrane as a helical segment. The Extracellular segment spans residues 97-110 (TSMHGYFVLGRLGC). Cys-110 and Cys-187 are joined by a disulfide. A helical transmembrane segment spans residues 111-133 (NVEGFSATLGGEIALWSLVVLAI). Positions 134-136 (ERW) match the 'Ionic lock' involved in activated form stabilization motif. Residues 134–152 (ERWVVVCKPISNFRFGENH) lie on the Cytoplasmic side of the membrane. The chain crosses the membrane as a helical span at residues 153 to 173 (AIMGVAFTWFMAAACAVPPLF). The Extracellular portion of the chain corresponds to 174 to 202 (GWSRYIPEGMQCSCGIDYYTRAEGFNNES). The N-linked (GlcNAc...) asparagine glycan is linked to Asn-200. A helical membrane pass occupies residues 203 to 224 (FVIYMFTCHFCIPLMVVFFCYG). Over 225-252 (RLVCAVKEAAAAQQESETTQRAEREVTR) the chain is Cytoplasmic. The chain crosses the membrane as a helical span at residues 253-274 (MVIIMVVSFLVSWVPYASVAWY). At 275–286 (IFTHQGSEFGPL) the chain is on the extracellular side. A helical membrane pass occupies residues 287-308 (FMTIPAFFAKSSSIYNPMIYIC). Position 296 is an N6-(retinylidene)lysine (Lys-296). Residues 309-354 (MNKQFRHCMITTLCCGKNPFEEEEGASSTASKTEASSVSSSSVSPA) are Cytoplasmic-facing. S-palmitoyl cysteine attachment occurs at residues Cys-322 and Cys-323. The interval 329–354 (EEEEGASSTASKTEASSVSSSSVSPA) is disordered. The segment covering 334–354 (ASSTASKTEASSVSSSSVSPA) has biased composition (low complexity).

The protein belongs to the G-protein coupled receptor 1 family. Opsin subfamily. Phosphorylated on some or all of the serine and threonine residues present in the C-terminal region. In terms of processing, contains one covalently linked retinal chromophore.

The protein localises to the membrane. It localises to the cell projection. It is found in the cilium. The protein resides in the photoreceptor outer segment. Its function is as follows. Photoreceptor required for image-forming vision at low light intensity. While most salt water fish species use retinal as chromophore, most freshwater fish use 3-dehydroretinal, or a mixture of retinal and 3-dehydroretinal. Light-induced isomerization of 11-cis to all-trans retinal triggers a conformational change that activates signaling via G-proteins. Subsequent receptor phosphorylation mediates displacement of the bound G-protein alpha subunit by arrestin and terminates signaling. The protein is Rhodopsin (rho) of Atherina boyeri (Big-scale sand smelt).